Reading from the N-terminus, the 242-residue chain is Lactate utilization protein A 2 (242 aa).

This sequence belongs to the LutA/YkgE family.

Functionally, is involved in L-lactate degradation and allows cells to grow with lactate as the sole carbon source. The chain is Lactate utilization protein A 2 from Bacillus cereus (strain ZK / E33L).